The primary structure comprises 49 residues: uncharacterized protein (49 aa).

Residues 22–42 (AIVGISIMIIIAIGIYLIIEY) traverse the membrane as a helical segment.

The protein localises to the membrane. This is an uncharacterized protein from Methanocaldococcus jannaschii (strain ATCC 43067 / DSM 2661 / JAL-1 / JCM 10045 / NBRC 100440) (Methanococcus jannaschii).